The chain runs to 294 residues: Bifunctional protein FolD (294 aa).

NADP(+) is bound by residues 176-178 (GAS), serine 201, and isoleucine 242.

The protein belongs to the tetrahydrofolate dehydrogenase/cyclohydrolase family. Homodimer.

The catalysed reaction is (6R)-5,10-methylene-5,6,7,8-tetrahydrofolate + NADP(+) = (6R)-5,10-methenyltetrahydrofolate + NADPH. The enzyme catalyses (6R)-5,10-methenyltetrahydrofolate + H2O = (6R)-10-formyltetrahydrofolate + H(+). It participates in one-carbon metabolism; tetrahydrofolate interconversion. In terms of biological role, catalyzes the oxidation of 5,10-methylenetetrahydrofolate to 5,10-methenyltetrahydrofolate and then the hydrolysis of 5,10-methenyltetrahydrofolate to 10-formyltetrahydrofolate. The polypeptide is Bifunctional protein FolD (Bordetella petrii (strain ATCC BAA-461 / DSM 12804 / CCUG 43448)).